The primary structure comprises 335 residues: Twinfilin (335 aa).

ADF-H domains lie at 4–140 and 176–316; these read SSGI…QHKL and GISF…NELH. A disordered region spans residues 307–335; that stretch reads SEESIINELHPPKVEEKKAFSKPSRPGRK. Basic and acidic residues predominate over residues 316 to 325; that stretch reads HPPKVEEKKA.

This sequence belongs to the actin-binding proteins ADF family. Twinfilin subfamily. In terms of assembly, interacts with G-actin; ADP-actin form.

Its subcellular location is the cytoplasm. It localises to the cytoskeleton. The protein localises to the cell cortex. Functionally, actin-binding protein involved in motile and morphological processes. Inhibits actin polymerization, likely by sequestering G-actin. The sequence is that of Twinfilin (twfA) from Dictyostelium discoideum (Social amoeba).